Consider the following 271-residue polypeptide: Mannosyl-3-phosphoglycerate phosphatase (271 aa).

The Nucleophile role is filled by aspartate 13. Residues aspartate 13, aspartate 15, and aspartate 214 each contribute to the Mg(2+) site.

It belongs to the HAD-like hydrolase superfamily. MPGP family. It depends on Mg(2+) as a cofactor.

It localises to the cytoplasm. It catalyses the reaction 2-O-(alpha-D-mannosyl)-3-phosphoglycerate + H2O = (2R)-2-O-(alpha-D-mannosyl)-glycerate + phosphate. This chain is Mannosyl-3-phosphoglycerate phosphatase, found in Escherichia coli (strain SE11).